A 1037-amino-acid polypeptide reads, in one-letter code: Multidrug resistance protein MdtF (1037 aa).

Residues 1 to 9 (MANYFIDRP) lie on the Cytoplasmic side of the membrane. The helical transmembrane segment at 10 to 30 (VFAWVLAIIMMLAGGLAIMNL) threads the bilayer. Residues 31–338 (PVAQYPQIAP…TTPFIKISIQ (308 aa)) are Periplasmic-facing. A helical membrane pass occupies residues 339-359 (EVFKTLVEAIILVFLVMYLFL). Over 360 to 369 (QNFRATIIPT) the chain is Cytoplasmic. A helical transmembrane segment spans residues 370–390 (IAVPVVILGTFAILSAVGFTI). Residues 391–392 (NT) are Periplasmic-facing. A helical membrane pass occupies residues 393-413 (LTMFGMVLAIGLLVDDAIVVV). Over 414 to 440 (ENVERVIAEDKLPPKEATHKSMGQIQR) the chain is Cytoplasmic. A helical membrane pass occupies residues 441–461 (ALVGIAVVLSAVFMPMAFMSG). The Periplasmic segment spans residues 462-471 (ATGEIYRQFS). A helical membrane pass occupies residues 472-492 (ITLISSMLLSVFVAMSLTPAL). Residues 493–534 (CATILKAAPEGGHKPNALFARFNTLFEKSTQHYTDSTRSLLR) lie on the Cytoplasmic side of the membrane. Residues 535–555 (CTGRYMVVYLLICAGMAVLFL) traverse the membrane as a helical segment. Residues 556 to 870 (RTPTSFLPEE…SYQEALSSNQ (315 aa)) lie on the Periplasmic side of the membrane. A helical transmembrane segment spans residues 871 to 891 (APALYAISLVVVFLALAALYE). A topological domain (cytoplasmic) is located at residue serine 892. The chain crosses the membrane as a helical span at residues 893 to 913 (WSIPFSVMLVVPLGVVGALLA). Topologically, residues 914–927 (TDLRGLSNDVYFQV) are periplasmic. A helical transmembrane segment spans residues 928–948 (GLLTTIGLSAKNAILIVEFAV). Topologically, residues 949 to 972 (EMMQKEGKTPVEAIIEAARMRLRP) are cytoplasmic. A helical transmembrane segment spans residues 973–993 (ILMTSLAFILGVLPLVISHGA). Residues 994 to 1006 (GSGAQNAVGTGVM) lie on the Periplasmic side of the membrane. A helical transmembrane segment spans residues 1007 to 1027 (GGMFAATVLAIYFVPVFFVVV). The Cytoplasmic segment spans residues 1028-1037 (EHLFARFKKA).

This sequence belongs to the resistance-nodulation-cell division (RND) (TC 2.A.6) family. As to quaternary structure, homotrimer. Part of the tripartite efflux system MdtEF-TolC, which is composed of an inner membrane transporter, MdtF, a membrane fusion protein, MdtE, and an outer membrane component, TolC. The complex forms a large protein conduit and can translocate molecules across both the inner and outer membranes.

It is found in the cell inner membrane. In terms of biological role, part of the tripartite efflux system MdtEF-TolC, which confers resistance to various compounds. The chain is Multidrug resistance protein MdtF (mdtF) from Escherichia coli O6:H1 (strain CFT073 / ATCC 700928 / UPEC).